An 81-amino-acid polypeptide reads, in one-letter code: Cortexin-2 (81 aa).

The chain crosses the membrane as a helical span at residues Thr-29–Phe-49.

Belongs to the cortexin family.

It is found in the membrane. The chain is Cortexin-2 (ctxn2) from Danio rerio (Zebrafish).